The sequence spans 106 residues: Photosystem II 5 kDa protein, chloroplastic (106 aa).

The N-terminal 76 residues, Met1–Ala76, are a transit peptide targeting the chloroplast. A disulfide bridge links Cys95 with Cys104.

Post-translationally, disulfide bond. As to expression, expressed in midvein, lamina and periphery of leaves (at protein level).

The protein localises to the plastid. It is found in the chloroplast thylakoid membrane. In terms of biological role, may be a component of the oxygen-evolving complex. The protein is Photosystem II 5 kDa protein, chloroplastic of Petunia hybrida (Petunia).